The primary structure comprises 131 residues: Glycine cleavage system H protein (131 aa).

The Lipoyl-binding domain maps to 24 to 106 (RAIVGISDHA…YGEGWIMVIE (83 aa)). Lys65 carries the N6-lipoyllysine modification.

Belongs to the GcvH family. The glycine cleavage system is composed of four proteins: P, T, L and H. (R)-lipoate serves as cofactor.

Functionally, the glycine cleavage system catalyzes the degradation of glycine. The H protein shuttles the methylamine group of glycine from the P protein to the T protein. This Xylella fastidiosa (strain 9a5c) protein is Glycine cleavage system H protein.